A 263-amino-acid polypeptide reads, in one-letter code: Proteasome subunit alpha type-1 (263 aa).

Position 1 is an N-acetylmethionine (Met1). Position 110 is a phosphoserine; alternate (Ser110). An O-linked (GlcNAc) serine; alternate glycan is attached at Ser110. Residue Lys115 forms a Glycyl lysine isopeptide (Lys-Gly) (interchain with G-Cter in ubiquitin) linkage. A Phosphoserine modification is found at Ser177. Lys208 is covalently cross-linked (Glycyl lysine isopeptide (Lys-Gly) (interchain with G-Cter in ubiquitin)). Positions 232-263 (FLEGLEERPQRKAQPTQPADEPAEKADEPMEH) are disordered. Residues 253–263 (PAEKADEPMEH) show a composition bias toward basic and acidic residues.

It belongs to the peptidase T1A family. As to quaternary structure, the 26S proteasome consists of a 20S proteasome core and two 19S regulatory subunits. The 20S proteasome core is a barrel-shaped complex made of 28 subunits that are arranged in four stacked rings. The two outer rings are each formed by seven alpha subunits, and the two inner rings are formed by seven beta subunits. The proteolytic activity is exerted by three beta-subunits PSMB5, PSMB6 and PSMB7. Interacts with NOTCH3. Interacts with ZFAND1.

It is found in the cytoplasm. The protein localises to the nucleus. Component of the 20S core proteasome complex involved in the proteolytic degradation of most intracellular proteins. This complex plays numerous essential roles within the cell by associating with different regulatory particles. Associated with two 19S regulatory particles, forms the 26S proteasome and thus participates in the ATP-dependent degradation of ubiquitinated proteins. The 26S proteasome plays a key role in the maintenance of protein homeostasis by removing misfolded or damaged proteins that could impair cellular functions, and by removing proteins whose functions are no longer required. Associated with the PA200 or PA28, the 20S proteasome mediates ubiquitin-independent protein degradation. This type of proteolysis is required in several pathways including spermatogenesis (20S-PA200 complex) or generation of a subset of MHC class I-presented antigenic peptides (20S-PA28 complex). The protein is Proteasome subunit alpha type-1 (PSMA1) of Bos taurus (Bovine).